The sequence spans 220 residues: Metalloproteinase inhibitor 2 (220 aa).

Positions 1-26 (MGAAARSLPLAFCLLLLGTLLPRADA) are cleaved as a signal peptide. Zn(2+) is bound at residue C27. Positions 27-30 (CSCS) are involved in metalloproteinase-binding. Cystine bridges form between C27-C98, C29-C127, C39-C152, C154-C201, C159-C164, and C172-C193. The region spanning 27 to 152 (CSCSPVHPQQ…SLNHRYQMGC (126 aa)) is the NTR domain.

It belongs to the protease inhibitor I35 (TIMP) family. As to quaternary structure, interacts (via the C-terminal) with MMP2 (via the C-terminal PEX domain); the interaction inhibits the MMP2 activity. The activity of TIMP2 is dependent on the presence of disulfide bonds.

It localises to the secreted. In terms of biological role, complexes with metalloproteinases (such as collagenases) and irreversibly inactivates them by binding to their catalytic zinc cofactor. The chain is Metalloproteinase inhibitor 2 (TIMP2) from Bos taurus (Bovine).